A 942-amino-acid chain; its full sequence is UvrABC system protein A (942 aa).

32–39 provides a ligand contact to ATP; the sequence is GLSGSGKS. The C4-type zinc-finger motif lies at 251-278; it reads CPVCGFTVPELEPRLFSFNAPFGSCPTC. ABC transporter domains follow at residues 308 to 589 and 609 to 937; these read WNPI…KKSI and GNGR…HYLK. 641–648 serves as a coordination point for ATP; it reads GVSGSGKS. Residues 740–766 form a C4-type zinc finger; that stretch reads CEACSGDGIIKIEMHFLPDVYVPCEVC.

Belongs to the ABC transporter superfamily. UvrA family. As to quaternary structure, forms a heterotetramer with UvrB during the search for lesions.

It localises to the cytoplasm. Functionally, the UvrABC repair system catalyzes the recognition and processing of DNA lesions. UvrA is an ATPase and a DNA-binding protein. A damage recognition complex composed of 2 UvrA and 2 UvrB subunits scans DNA for abnormalities. When the presence of a lesion has been verified by UvrB, the UvrA molecules dissociate. The protein is UvrABC system protein A of Streptococcus pyogenes serotype M1.